Reading from the N-terminus, the 938-residue chain is LPS-assembly protein LptD (938 aa).

The signal sequence occupies residues 1 to 33; it reads MAVKHPAFRKKFPLLVTGSLLALQPAFSLQSFA. The segment at 52–96 is disordered; it reads KTATSALPPRPQHSRSAVSTTSGSATATATKQEPAPVLVTESKGR. Residues 65 to 81 show a composition bias toward low complexity; that stretch reads SRSAVSTTSGSATATAT.

This sequence belongs to the LptD family. As to quaternary structure, component of the lipopolysaccharide transport and assembly complex. Interacts with LptE and LptA.

The protein localises to the cell outer membrane. Its function is as follows. Together with LptE, is involved in the assembly of lipopolysaccharide (LPS) at the surface of the outer membrane. This is LPS-assembly protein LptD from Ectopseudomonas mendocina (strain ymp) (Pseudomonas mendocina).